We begin with the raw amino-acid sequence, 618 residues long: 1-aminocyclopropane-1-carboxylate synthase-like protein 1 (618 aa).

Positions 11–26 (QGTQTPAAQTTCAPST) are enriched in low complexity. Residues 11-54 (QGTQTPAAQTTCAPSTMSSSSRPPLETLQAQSVSADETPGSALP) are disordered. Polar residues predominate over residues 27 to 45 (MSSSSRPPLETLQAQSVSA). Glu-122 contributes to the substrate binding site. At Lys-340 the chain carries N6-(pyridoxal phosphate)lysine.

It belongs to the class-I pyridoxal-phosphate-dependent aminotransferase family.

This Takifugu rubripes (Japanese pufferfish) protein is 1-aminocyclopropane-1-carboxylate synthase-like protein 1 (accs).